Consider the following 178-residue polypeptide: Photosystem I assembly protein Ycf4 (178 aa).

2 helical membrane passes run 19–39 (ILVAAMVTIGGVGFLFASLSS) and 61–81 (LVMGLYSIAAALLATYLWAVI).

Belongs to the Ycf4 family.

The protein localises to the cellular thylakoid membrane. Functionally, seems to be required for the assembly of the photosystem I complex. The polypeptide is Photosystem I assembly protein Ycf4 (Synechococcus sp. (strain WH7803)).